A 618-amino-acid chain; its full sequence is Dihydroxy-acid dehydratase 1 (618 aa).

Asp-81 contributes to the Mg(2+) binding site. Cys-122 provides a ligand contact to [2Fe-2S] cluster. Mg(2+) contacts are provided by Asp-123 and Lys-124. Position 124 is an N6-carboxylysine (Lys-124). Cys-195 contributes to the [2Fe-2S] cluster binding site. Glu-491 is a Mg(2+) binding site. Ser-517 serves as the catalytic Proton acceptor.

The protein belongs to the IlvD/Edd family. As to quaternary structure, homodimer. [2Fe-2S] cluster serves as cofactor. Requires Mg(2+) as cofactor.

It carries out the reaction (2R)-2,3-dihydroxy-3-methylbutanoate = 3-methyl-2-oxobutanoate + H2O. It catalyses the reaction (2R,3R)-2,3-dihydroxy-3-methylpentanoate = (S)-3-methyl-2-oxopentanoate + H2O. Its pathway is amino-acid biosynthesis; L-isoleucine biosynthesis; L-isoleucine from 2-oxobutanoate: step 3/4. It participates in amino-acid biosynthesis; L-valine biosynthesis; L-valine from pyruvate: step 3/4. Its function is as follows. Functions in the biosynthesis of branched-chain amino acids. Catalyzes the dehydration of (2R,3R)-2,3-dihydroxy-3-methylpentanoate (2,3-dihydroxy-3-methylvalerate) into 2-oxo-3-methylpentanoate (2-oxo-3-methylvalerate) and of (2R)-2,3-dihydroxy-3-methylbutanoate (2,3-dihydroxyisovalerate) into 2-oxo-3-methylbutanoate (2-oxoisovalerate), the penultimate precursor to L-isoleucine and L-valine, respectively. This Pseudoalteromonas translucida (strain TAC 125) protein is Dihydroxy-acid dehydratase 1.